The sequence spans 463 residues: Argininosuccinate lyase (463 aa).

2-(N(omega)-L-arginino)succinate contacts are provided by serine 27, asparagine 115, and threonine 161. Catalysis depends on histidine 162, which acts as the Proton acceptor. The active-site Proton donor is the serine 283. Asparagine 291, tyrosine 323, glutamine 328, and lysine 331 together coordinate 2-(N(omega)-L-arginino)succinate.

Belongs to the lyase 1 family. Argininosuccinate lyase subfamily. In terms of assembly, homotetramer.

It carries out the reaction 2-(N(omega)-L-arginino)succinate = fumarate + L-arginine. The protein operates within amino-acid biosynthesis; L-arginine biosynthesis; L-arginine from L-ornithine and carbamoyl phosphate: step 3/3. This chain is Argininosuccinate lyase (ARG4), found in Saccharomyces paradoxus (Yeast).